The chain runs to 132 residues: MKKVLALIVAATMGLSSVAFAAETTAAATAAPAATSTTAAPAVEKAAPAKATHHKKHKATKQTTEQKAQAAKKAVKKAPAQKAQAAKKAVKKAPVQKAQAAKKHVKKAPAQKAQAAKKHHKTAKKSATAPAA.

A signal peptide spans 1-21 (MKKVLALIVAATMGLSSVAFA). Positions 22 to 69 (AETTAAATAAPAATSTTAAPAVEKAAPAKATHHKKHKATKQTTEQKAQ) are excised as a propeptide. Low complexity predominate over residues 30–50 (AAPAATSTTAAPAVEKAAPAK). Positions 30 to 132 (AAPAATSTTA…AKKSATAPAA (103 aa)) are disordered. A compositionally biased stretch (basic residues) spans 51–60 (ATHHKKHKAT). Over residues 61 to 99 (KQTTEQKAQAAKKAVKKAPAQKAQAAKKAVKKAPVQKAQ) the composition is skewed to low complexity. A compositionally biased stretch (basic residues) spans 100-124 (AAKKHVKKAPAQKAQAAKKHHKTAK).

The protein belongs to the Asr family. Proteolytic processing gives rise to the active protein.

The protein localises to the periplasm. In terms of biological role, required for growth and/or survival at acidic conditions. The chain is Acid shock protein from Yersinia enterocolitica serotype O:8 / biotype 1B (strain NCTC 13174 / 8081).